We begin with the raw amino-acid sequence, 501 residues long: Protein disulfide isomerase-like 1-1 (501 aa).

Positions 1-23 (MAMRGFTLFSILVLSLCASSIRS) are cleaved as a signal peptide. The Thioredoxin 1 domain maps to 24–141 (EETETKEFVL…IVTYLKKQSG (118 aa)). N-linked (GlcNAc...) asparagine glycosylation is present at Asn39. Catalysis depends on nucleophile residues Cys59 and Cys62. The cysteines at positions 59 and 62 are disulfide-linked. A glycan (N-linked (GlcNAc...) asparagine) is linked at Asn275. In terms of domain architecture, Thioredoxin 2 spans 354–482 (FKDGKIAPHK…FISFVDKNKD (129 aa)). Residues Cys404 and Cys407 each act as nucleophile in the active site. Cysteines 404 and 407 form a disulfide. The short motif at 498-501 (KDEL) is the Prevents secretion from ER element.

Belongs to the protein disulfide isomerase family. Interacts with RD21A, At3g19390, At5g43060. As to expression, highly expressed in flowers, stems and immature seeds, and at lower levels in leaves and siliques (at protein level).

The protein resides in the endoplasmic reticulum lumen. The protein localises to the vacuole. It carries out the reaction Catalyzes the rearrangement of -S-S- bonds in proteins.. Its function is as follows. Protein disulfide isomerase that associates with RD21A protease for trafficking from the ER through the Golgi to lytic and protein storage vacuoles of endothelial cells in developing seeds. Regulates the timing of programmed cell death (PCD) of the endothelial cells by chaperoning and inhibiting cysteine proteases during their trafficking to vacuoles. The chain is Protein disulfide isomerase-like 1-1 (PDIL1-1) from Arabidopsis thaliana (Mouse-ear cress).